We begin with the raw amino-acid sequence, 457 residues long: Karyogamy meiotic segregation protein 2 (457 aa).

Ser134 carries the phosphoserine modification.

Interacts with sad1.

It localises to the cytoplasm. Its subcellular location is the cytoskeleton. The protein localises to the microtubule organizing center. It is found in the spindle pole body. This is Karyogamy meiotic segregation protein 2 (kms2) from Schizosaccharomyces pombe (strain 972 / ATCC 24843) (Fission yeast).